A 742-amino-acid polypeptide reads, in one-letter code: Collectin-12 (742 aa).

The Cytoplasmic segment spans residues 1–37 (MKDDFAEEEEVQSFGYKRFGIQEGTQCTKCKNNWALK). Residues 38–58 (FSIILLYILCALLTITVAILG) traverse the membrane as a helical; Signal-anchor for type II membrane protein segment. The Extracellular segment spans residues 59 to 742 (YKVVEKMDNV…DRETVLSSAL (684 aa)). Asparagine 67 carries N-linked (GlcNAc...) asparagine glycosylation. The stretch at 73–141 (ETSRQTYDDK…NKDTLEKLQA (69 aa)) forms a coiled coil. 3 N-linked (GlcNAc...) asparagine glycosylation sites follow: asparagine 159, asparagine 168, and asparagine 271. A coiled-coil region spans residues 215-328 (QQRNLITNLQ…KDAENRTAIK (114 aa)). The tract at residues 439 to 608 (TILQGPPGPR…TPAPEDNGCP (170 aa)) is disordered. 3 consecutive Collagen-like domains span residues 443 to 472 (GPPGPRGPRGDRGSQGPPGPTGNKGQKGEK), 473 to 529 (GEPG…PGPP), and 530 to 589 (GPPG…SGAV). Low complexity-rich tracts occupy residues 502 to 525 (KGSQGPKGSRGSPGKPGPQGSSGD) and 534 to 556 (KEGLPGPQGPPGFQGLQGTVGEP). Over residues 571–585 (PGMPGPKGPPGPPGP) the composition is skewed to pro residues. Disulfide bonds link cysteine 607–cysteine 618, cysteine 635–cysteine 730, and cysteine 708–cysteine 722. Positions 614–731 (FTDKCYYFSV…CEDVNNFICE (118 aa)) constitute a C-type lectin domain. Ca(2+) is bound by residues phenylalanine 644, asparagine 646, glutamate 650, aspartate 670, and glutamate 674. Positions 691, 694, and 696 each coordinate a carbohydrate. Ca(2+) is bound by residues glutamine 694, aspartate 696, asparagine 697, glutamate 706, aspartate 707, asparagine 718, aspartate 719, and glutamate 731. An a carbohydrate-binding site is contributed by glutamate 706. Residues asparagine 718 and aspartate 719 each coordinate a carbohydrate.

As to quaternary structure, the extracellular domain forms a stable trimer. The extracellular domain interacts with fibrillar amyloid-beta peptide. In terms of tissue distribution, expressed in perivascular macrophages. Expressed in plaques-surrounding reactive astrocytes and in perivascular astrocytes associated with cerebral amyloid angiopathy (CAA) in the temporal cortex of Alzheimer patient (at protein level). Strongly expressed in placenta. Moderately expressed in heart, skeletal muscle, small intestine and lung. Weakly expressed in brain, colon, thymus and kidney. Expressed in nurse-like cells. Expressed in reactive astrocytes and vascular/perivascular cells in the brain of Alzheimer patient.

It localises to the membrane. Scavenger receptor that displays several functions associated with host defense. Promotes binding and phagocytosis of Gram-positive, Gram-negative bacteria and yeast. Mediates the recognition, internalization and degradation of oxidatively modified low density lipoprotein (oxLDL) by vascular endothelial cells. Binds to several carbohydrates including Gal-type ligands, D-galactose, L- and D-fucose, GalNAc, T and Tn antigens in a calcium-dependent manner and internalizes specifically GalNAc in nurse-like cells. Also binds to sialyl Lewis X or a trisaccharide and asialo-orosomucoid (ASOR). May also play a role in the clearance of amyloid-beta in Alzheimer disease. This is Collectin-12 (COLEC12) from Homo sapiens (Human).